Reading from the N-terminus, the 94-residue chain is RING finger protein Z (94 aa).

The interval 1–22 is disordered; that stretch reads MGNCNKPPKRPPNTQTSAAQPS. Residue G2 is the site of N-myristoyl glycine; by host attachment. An RING-type; atypical zinc finger spans residues 39 to 75; sequence CKCCWFADTNLITCNDHYLCLRCHQTMLRNSELCHIC. The PTAP/PSAP motif signature appears at 89–92; the sequence is PSAP.

This sequence belongs to the arenaviridae Z protein family. As to quaternary structure, interacts with protein NP; this interaction probably directs the encapsidated genome to budding sites. Interacts (via RING domain) with polymerase L; this interaction inhibits viral transcription and replication, Z partially blocks the product exit tunnel for the releasing nascent RNA product. Interacts with the glycoprotein complex; this interaction plays a role in virion budding. Interacts with host eIF4E; this interaction results in eIF4E reduced affinity for its substrate, the 5'-m7 G cap structure. Interacts (via late-budding domain) with host TSG101; this interaction is essential for budding and release of viral particles. Interacts with host RPLP0; this interaction may serve to load ribosome-like particles inside the virion. Interacts with host PML; this interaction induces PML bodies redistribution in the cytoplasm upon viral infection. Myristoylation is required for the role of RING finger protein Z in assembly and budding.

The protein localises to the virion. The protein resides in the host cytoplasm. It is found in the host perinuclear region. It localises to the host cell membrane. Plays a crucial role in virion assembly and budding. Expressed late in the virus life cycle, it acts as an inhibitor of viral transcription and RNA synthesis by interacting with the viral polymerase L. Presumably recruits the NP encapsidated genome to cellular membranes at budding sites via direct interaction with NP. Plays critical roles in the final steps of viral release by interacting with host TSG101, a member of the vacuolar protein-sorting pathway and using other cellular host proteins involved in vesicle formation pathway. The budding of the virus progeny occurs after association of protein Z with the viral glycoprotein complex SSP-GP1-GP2 at the cell periphery, step that requires myristoylation of protein Z. Also selectively represses protein production by associating with host eIF4E. In cell-based minigenome assay, has an inhibitory effect on the ribonucleoprotein machinery (vRNP), which is responsible for the replication and transcription of the viral genome. This is RING finger protein Z from Calomys callosus (Large vesper mouse).